Consider the following 682-residue polypeptide: Pneumocandin biosynthesis cluster protein B (682 aa).

Residues 63 to 73 (SSLSSTEVTSS) are compositionally biased toward low complexity. Disordered regions lie at residues 63–86 (SSLS…DAPE), 107–129 (QNTP…DTNQ), and 251–358 (SEST…SPAN). Polar residues-rich tracts occupy residues 257–279 (NTGS…SHSS) and 310–320 (PRQTTEATPCD). Positions 335-349 (PERRSMKMVRKEARD) are enriched in basic and acidic residues.

Part of the gene cluster that mediates the biosynthesis of pneumocandins, lipohexapeptides of the echinocandin family that prevent fungal cell wall formation by non-competitive inhibition of beta-1,3-glucan synthase. The 10,12-dimethylmyristoyl side chain is synthesized by the reducing polyketide synthase gloL/GLPKS4. The thioesterase gloN/GLHYD exclusively interacts with gloL/GLPKS4 to maintain turnover of the polyketide side chain. The 10R,12S-dimethylmyristic acid is then transferred to the first thiolation domain of the nonribosomal peptide synthetase gloA/GLNRPS4 by the acyl-AMP ligase gloD/GLligase, followed by its acylation to L-ornithine to trigger elongation of the cyclic hexapeptide. L-ornithine, 4R-hydroxyl-L-proline (generated from L-proline by the dioxygenase gloF/GLOXY2), 3S-hydroxyl-L-homotyrosine (generated by gloG/GLHtyB, gloH/GLHtyA, gloI/GLHtyC, gloJ/GLHtyD and hydroxylated at C-3 by the dioxygenase gloM/GLOXY1), 3R-hydroxyl-L-glutamine (generated from L-glutamine probably by the dioxygenase gloE/GLOXY3) and 3S-hydroxyl-L-proline (generated from L-proline by the dioxygenase gloF/GLOXY2 to yield pneumocandin B0), or 3S-hydroxyl-4S-methyl-L-proline (generated from L-leucine by the dioxygenase gloC/GLOXY4 to yield pneumocandin A0) are sequentially added to the growing chain. The last C domain of gloA/GLNRPS4 is proposed to be responsible for cyclization by condensation to form the peptide bond between L-ornithine and 3S-hydroxyl-4S-methyl-L-proline (for pneumocandin A0) or 3S-hydroxyl-L-proline (for pneumocandin B0). Finally, the subsequent C-4 hydroxylation of 3S-hydroxyl-L-homotyrosine and L-ornithine dihydroxylation at C-4 and C-5 are performed by the cytochrome P450 monooxygenases gloP/GLP450-1 and gloO/GLP450-2, respectively. This chain is Pneumocandin biosynthesis cluster protein B, found in Glarea lozoyensis (strain ATCC 20868 / MF5171).